The sequence spans 175 residues: NADH-ubiquinone oxidoreductase chain 6 (175 aa).

Transmembrane regions (helical) follow at residues 1 to 21, 25 to 45, 47 to 67, 88 to 108, and 149 to 169; these read MMTYIVFILSVIFVVSFVGFS, SPIYGGLVLIVSGGVGCGIIM, FGGSFLGLMVFLIYLGGMLVV, TVMGVFLLGLLMEVMLVLYVL, and YGAWVVIVTGWSLLVGVLVIL.

Belongs to the complex I subunit 6 family. As to quaternary structure, core subunit of respiratory chain NADH dehydrogenase (Complex I) which is composed of 45 different subunits.

It is found in the mitochondrion inner membrane. The catalysed reaction is a ubiquinone + NADH + 5 H(+)(in) = a ubiquinol + NAD(+) + 4 H(+)(out). Functionally, core subunit of the mitochondrial membrane respiratory chain NADH dehydrogenase (Complex I) which catalyzes electron transfer from NADH through the respiratory chain, using ubiquinone as an electron acceptor. Essential for the catalytic activity and assembly of complex I. This chain is NADH-ubiquinone oxidoreductase chain 6 (MT-ND6), found in Equus caballus (Horse).